Here is a 177-residue protein sequence, read N- to C-terminus: ATP synthase subunit delta (177 aa).

The protein belongs to the ATPase delta chain family. F-type ATPases have 2 components, F(1) - the catalytic core - and F(0) - the membrane proton channel. F(1) has five subunits: alpha(3), beta(3), gamma(1), delta(1), epsilon(1). F(0) has three main subunits: a(1), b(2) and c(10-14). The alpha and beta chains form an alternating ring which encloses part of the gamma chain. F(1) is attached to F(0) by a central stalk formed by the gamma and epsilon chains, while a peripheral stalk is formed by the delta and b chains.

The protein resides in the cell inner membrane. Its function is as follows. F(1)F(0) ATP synthase produces ATP from ADP in the presence of a proton or sodium gradient. F-type ATPases consist of two structural domains, F(1) containing the extramembraneous catalytic core and F(0) containing the membrane proton channel, linked together by a central stalk and a peripheral stalk. During catalysis, ATP synthesis in the catalytic domain of F(1) is coupled via a rotary mechanism of the central stalk subunits to proton translocation. This protein is part of the stalk that links CF(0) to CF(1). It either transmits conformational changes from CF(0) to CF(1) or is implicated in proton conduction. This Azobacteroides pseudotrichonymphae genomovar. CFP2 protein is ATP synthase subunit delta.